We begin with the raw amino-acid sequence, 204 residues long: Holliday junction branch migration complex subunit RuvA (204 aa).

Residues 1–64 (MIGRLQGILL…EDAHLLFGFS (64 aa)) are domain I. The interval 65–143 (AKTDRTLFRE…GIKQPDFFVE (79 aa)) is domain II. The flexible linker stretch occupies residues 144–155 (SSHVGAVDPVTT). The domain III stretch occupies residues 156 to 204 (SPEVPAEEAVAALMALGYKASDAEKMVKRIAKPHLTSEQLIREALKAAL).

This sequence belongs to the RuvA family. In terms of assembly, homotetramer. Forms an RuvA(8)-RuvB(12)-Holliday junction (HJ) complex. HJ DNA is sandwiched between 2 RuvA tetramers; dsDNA enters through RuvA and exits via RuvB. An RuvB hexamer assembles on each DNA strand where it exits the tetramer. Each RuvB hexamer is contacted by two RuvA subunits (via domain III) on 2 adjacent RuvB subunits; this complex drives branch migration. In the full resolvosome a probable DNA-RuvA(4)-RuvB(12)-RuvC(2) complex forms which resolves the HJ.

It localises to the cytoplasm. Its function is as follows. The RuvA-RuvB-RuvC complex processes Holliday junction (HJ) DNA during genetic recombination and DNA repair, while the RuvA-RuvB complex plays an important role in the rescue of blocked DNA replication forks via replication fork reversal (RFR). RuvA specifically binds to HJ cruciform DNA, conferring on it an open structure. The RuvB hexamer acts as an ATP-dependent pump, pulling dsDNA into and through the RuvAB complex. HJ branch migration allows RuvC to scan DNA until it finds its consensus sequence, where it cleaves and resolves the cruciform DNA. In Mannheimia succiniciproducens (strain KCTC 0769BP / MBEL55E), this protein is Holliday junction branch migration complex subunit RuvA.